The sequence spans 234 residues: Endonuclease V (234 aa).

Positions 36 and 104 each coordinate Mg(2+).

Belongs to the endonuclease V family. The cofactor is Mg(2+).

The protein resides in the cytoplasm. The catalysed reaction is Endonucleolytic cleavage at apurinic or apyrimidinic sites to products with a 5'-phosphate.. DNA repair enzyme involved in the repair of deaminated bases. Selectively cleaves double-stranded DNA at the second phosphodiester bond 3' to a deoxyinosine leaving behind the intact lesion on the nicked DNA. The chain is Endonuclease V from Yersinia pestis.